The following is a 64-amino-acid chain: MSTFVIVFLLLTAVLCHAEPALDETARGCNRLNKKCNSDGDCCRYGERCISTGVNYYCKPDFGP.

An N-terminal signal peptide occupies residues Met1–Ala18. The propeptide occupies Glu19–Arg27. Disulfide bonds link Cys29-Cys43, Cys36-Cys49, and Cys42-Cys58.

Belongs to the scorpion calcin-like family. As to expression, expressed by the venom gland.

Its subcellular location is the secreted. Functionally, may increase intracellular calcium release through the activation of nuclear inositol 1,4,5-trisphosphate receptors (ITPR) of cardiomyocytes, thereby causing an increase in the contraction frequency of these cells. In Buthus israelis (Israeli scorpion), this protein is Putative calcium channel toxin Tx758.